The chain runs to 534 residues: Ethanolamine kinase (534 aa).

Serine 23 is modified (phosphoserine).

The protein belongs to the choline/ethanolamine kinase family.

The protein resides in the cytoplasm. The enzyme catalyses ethanolamine + ATP = phosphoethanolamine + ADP + H(+). It catalyses the reaction choline + ATP = phosphocholine + ADP + H(+). It participates in phospholipid metabolism; phosphatidylethanolamine biosynthesis; phosphatidylethanolamine from ethanolamine: step 1/3. Functionally, catalyzes the committed step of phosphatidylethanolamine synthesis via the CDP-ethanolamine branch of the Kennedy pathway. Also exhibits choline kinase activity, thus contributing to phosphatidylcholine synthesis via the CDP-choline pathway, but its preferred substrate is ethanolamine. The polypeptide is Ethanolamine kinase (EKI1) (Saccharomyces cerevisiae (strain ATCC 204508 / S288c) (Baker's yeast)).